The following is a 101-amino-acid chain: Unclassified hydrophobin dewD (101 aa).

Residues 1–21 form the signal peptide; sequence MHLSTSAAAILALSLAGPTMA. 4 disulfides stabilise this stretch: cysteine 27–cysteine 81, cysteine 41–cysteine 73, cysteine 42–cysteine 60, and cysteine 82–cysteine 91.

As to quaternary structure, self-assembles to form functional amyloid fibrils called rodlets. Self-assembly into fibrillar rodlets occurs spontaneously at hydrophobic:hydrophilic interfaces and the rodlets further associate laterally to form amphipathic monolayers.

The protein localises to the secreted. Its subcellular location is the spore wall. In terms of biological role, aerial growth, conidiation, and dispersal of filamentous fungi in the environment rely upon a capability of their secreting small amphipathic proteins called hydrophobins (HPBs) with low sequence identity. Class I can self-assemble into an outermost layer of rodlet bundles on aerial cell surfaces, conferring cellular hydrophobicity that supports fungal growth, development and dispersal; whereas Class II form highly ordered films at water-air interfaces through intermolecular interactions but contribute nothing to the rodlet structure. DewD is an unclassified hydrophobin that contributes to the hydrophobicity of the spore surface. This is Unclassified hydrophobin dewD from Emericella nidulans (strain FGSC A4 / ATCC 38163 / CBS 112.46 / NRRL 194 / M139) (Aspergillus nidulans).